Reading from the N-terminus, the 2923-residue chain is Cadherin EGF LAG seven-pass G-type receptor 2 (2923 aa).

The signal sequence occupies residues methionine 1–glycine 31. The Extracellular portion of the chain corresponds to aspartate 32–threonine 2380. Positions proline 154–threonine 198 are disordered. Basic and acidic residues predominate over residues alanine 158–glycine 168. The span at valine 175 to alanine 196 shows a compositional bias: polar residues. Cadherin domains are found at residues glutamine 182–phenylalanine 289, glutamate 290–phenylalanine 399, serine 400–phenylalanine 505, valine 506–phenylalanine 610, threonine 611–phenylalanine 712, glutamine 713–phenylalanine 815, leucine 816–phenylalanine 921, glutamate 922–leucine 1023, and isoleucine 1028–leucine 1146. Residues asparagine 486, asparagine 557, and asparagine 701 are each glycosylated (N-linked (GlcNAc...) asparagine). N-linked (GlcNAc...) asparagine glycans are attached at residues asparagine 1036, asparagine 1076, asparagine 1182, and asparagine 1212. One can recognise an EGF-like 1; calcium-binding domain in the interval aspartate 1228–glutamate 1286. 9 disulfides stabilise this stretch: cysteine 1232-cysteine 1243, cysteine 1237-cysteine 1274, cysteine 1276-cysteine 1285, cysteine 1292-cysteine 1303, cysteine 1297-cysteine 1312, cysteine 1314-cysteine 1323, cysteine 1332-cysteine 1343, cysteine 1337-cysteine 1353, and cysteine 1355-cysteine 1365. The EGF-like 2; calcium-binding domain maps to glutamate 1288–glutamate 1324. One can recognise an EGF-like 3; calcium-binding domain in the interval arginine 1328–glutamine 1366. Residues valine 1367–cysteine 1571 form the Laminin G-like 1 domain. N-linked (GlcNAc...) asparagine glycans are attached at residues asparagine 1501 and asparagine 1565. 4 cysteine pairs are disulfide-bonded: cysteine 1545-cysteine 1571, cysteine 1578-cysteine 1589, cysteine 1583-cysteine 1598, and cysteine 1600-cysteine 1609. The region spanning lysine 1574–alanine 1610 is the EGF-like 4; calcium-binding domain. Asparagine 1591 bears the (3R)-3-hydroxyasparagine mark. Positions alanine 1614–cysteine 1791 constitute a Laminin G-like 2 domain. Asparagine 1741 carries an N-linked (GlcNAc...) asparagine glycan. Disulfide bonds link cysteine 1761–cysteine 1791, cysteine 1797–cysteine 1808, cysteine 1802–cysteine 1817, cysteine 1819–cysteine 1828, cysteine 1832–cysteine 1843, cysteine 1837–cysteine 1855, cysteine 1857–cysteine 1866, cysteine 1887–cysteine 1899, cysteine 1889–cysteine 1906, cysteine 1908–cysteine 1921, cysteine 1924–cysteine 1936, cysteine 1926–cysteine 1943, cysteine 1945–cysteine 1954, and cysteine 1957–cysteine 1969. The EGF-like 5; calcium-binding domain occupies leucine 1793–cysteine 1828. A (3R)-3-hydroxyasparagine modification is found at asparagine 1810. Asparagine 1827 is a glycosylation site (N-linked (GlcNAc...) asparagine). Residues threonine 1829–glutamate 1867 form the EGF-like 6; calcium-binding domain. Positions threonine 1883–leucine 1922 constitute an EGF-like 7; calcium-binding domain. N-linked (GlcNAc...) asparagine glycosylation occurs at asparagine 1900. Positions cysteine 1924–valine 1971 constitute a Laminin EGF-like domain. Asparagine 2024, asparagine 2043, and asparagine 2061 each carry an N-linked (GlcNAc...) asparagine glycan. Residues glutamate 2199–glutamate 2369 enclose the GAIN-B domain. A disordered region spans residues proline 2213–proline 2238. Disulfide bonds link cysteine 2319-cysteine 2351 and cysteine 2339-cysteine 2353. The interval cysteine 2319 to glutamate 2369 is GPS. Residues asparagine 2323 and asparagine 2345 are each glycosylated (N-linked (GlcNAc...) asparagine). Residues tyrosine 2381 to leucine 2401 traverse the membrane as a helical segment. Residues arginine 2402–threonine 2416 lie on the Cytoplasmic side of the membrane. A helical membrane pass occupies residues alanine 2417 to phenylalanine 2437. Residue alanine 2438 is a topological domain, extracellular. The helical transmembrane segment at cysteine 2439–leucine 2459 threads the bilayer. The Cytoplasmic portion of the chain corresponds to glutamate 2460 to arginine 2480. The chain crosses the membrane as a helical span at residues phenylalanine 2481–aspartate 2501. At proline 2502–leucine 2519 the chain is on the extracellular side. A helical membrane pass occupies residues isoleucine 2520–leucine 2540. Residues alanine 2541–serine 2560 lie on the Cytoplasmic side of the membrane. A helical membrane pass occupies residues glycine 2561–leucine 2581. The Extracellular segment spans residues serine 2582–histidine 2591. The chain crosses the membrane as a helical span at residues tyrosine 2592 to leucine 2612. Residues serine 2613 to histidine 2923 are Cytoplasmic-facing. Disordered stretches follow at residues serine 2688 to isoleucine 2838 and leucine 2854 to leucine 2888. 2 stretches are compositionally biased toward acidic residues: residues threonine 2718–glutamine 2730 and serine 2742–alanine 2753. Over residues proline 2807 to serine 2819 the composition is skewed to basic and acidic residues. The span at glycine 2863 to glycine 2873 shows a compositional bias: low complexity.

It belongs to the G-protein coupled receptor 2 family. LN-TM7 subfamily. As to quaternary structure, heterodimer of 2 chains generated by proteolytic processing; the large extracellular N-terminal fragment and the membrane-bound C-terminal fragment predominantly remain associated and non-covalently linked. Post-translationally, the iron and 2-oxoglutarate dependent 3-hydroxylation of aspartate and asparagine is (R) stereospecific within EGF domains. Autoproteolytically processed at the GPS region of the GAIN-B domain; this cleavage modulates receptor activity. In terms of tissue distribution, highest expression in brain and testis.

The protein resides in the cell membrane. Its function is as follows. Receptor that may have an important role in cell/cell signaling during nervous system formation. In Homo sapiens (Human), this protein is Cadherin EGF LAG seven-pass G-type receptor 2.